Reading from the N-terminus, the 343-residue chain is Palmitoyltransferase ZDHHC4 (343 aa).

Residues 1–2 (MD) lie on the Lumenal side of the membrane. The chain crosses the membrane as a helical span at residues 3 to 23 (FLVLFSFYLAFLLICVIMICI). The Cytoplasmic portion of the chain corresponds to 24 to 67 (FTKSQRLKAVVLGGAQVCARVTPQCFQRAVQTLLHQLFHTRHPA). Residues 68–88 (FLALHLLLQGLVYAEYTYEVF) form a helical membrane-spanning segment. Residues 89-95 (SYCRELE) are Lumenal-facing. The chain crosses the membrane as a helical span at residues 96-116 (FSLPCLLLPYVLLSVNLVFFT). Topologically, residues 117–193 (LTCSTNPGTI…NCIGAWNTGY (77 aa)) are cytoplasmic. A DHHC domain is found at 149–199 (SRCSTCDLRKPARSKHCRVCDRCVHRFDHHCVWVNNCIGAWNTGYFLIYLL). The active-site S-palmitoyl cysteine intermediate is the Cys179. Residues 194 to 214 (FLIYLLTLTASAATIAILSAA) traverse the membrane as a helical segment. The Lumenal segment spans residues 215–255 (FLLRLVAVSNLYQETYLDDLGRFQAVDTGFLIQHLFLAFPR). The chain crosses the membrane as a helical span at residues 256–276 (IIFLLGFVIVLSLLLAGYLCF). The Cytoplasmic portion of the chain corresponds to 277–343 (ALYLAATNQT…ATPSYKKKKR (67 aa)). The short motif at 340 to 343 (KKKR) is the Di-lysine motif element.

Belongs to the DHHC palmitoyltransferase family. As to quaternary structure, interacts with CPT1A.

The protein localises to the endoplasmic reticulum membrane. The protein resides in the golgi apparatus membrane. It localises to the cell membrane. It catalyses the reaction L-cysteinyl-[protein] + hexadecanoyl-CoA = S-hexadecanoyl-L-cysteinyl-[protein] + CoA. Its function is as follows. Palmitoyltransferase that could catalyze the addition of palmitate onto protein substrates including the D(2) dopamine receptor DRD2, GSK3B or MAVS. Mediates GSK3B palmitoylation to prevent its AKT1-mediated phosphorylation leading to activation of the STAT3 signaling pathway. Also catalyzes MAVS palmitoylation which promotes its stabilization and activation by inhibiting 'Lys-48'- but facilitating 'Lys-63'-linked ubiquitination. The polypeptide is Palmitoyltransferase ZDHHC4 (Rattus norvegicus (Rat)).